Reading from the N-terminus, the 588-residue chain is 2-isopropylmalate synthase (588 aa).

One can recognise a Pyruvate carboxyltransferase domain in the interval 40–314; sequence PRWCAVDLRD…DPQIDFSDLD (275 aa). Mg(2+)-binding residues include aspartate 49, histidine 253, histidine 255, and asparagine 289. Residues 456 to 588 form a regulatory domain region; it reads APLDRVEEKW…TVREPELAAV (133 aa).

The protein belongs to the alpha-IPM synthase/homocitrate synthase family. LeuA type 2 subfamily. As to quaternary structure, homodimer. It depends on Mg(2+) as a cofactor.

Its subcellular location is the cytoplasm. The enzyme catalyses 3-methyl-2-oxobutanoate + acetyl-CoA + H2O = (2S)-2-isopropylmalate + CoA + H(+). It participates in amino-acid biosynthesis; L-leucine biosynthesis; L-leucine from 3-methyl-2-oxobutanoate: step 1/4. Catalyzes the condensation of the acetyl group of acetyl-CoA with 3-methyl-2-oxobutanoate (2-ketoisovalerate) to form 3-carboxy-3-hydroxy-4-methylpentanoate (2-isopropylmalate). This chain is 2-isopropylmalate synthase, found in Clavibacter sepedonicus (Clavibacter michiganensis subsp. sepedonicus).